The following is a 104-amino-acid chain: Large ribosomal subunit protein bL21 (104 aa).

This sequence belongs to the bacterial ribosomal protein bL21 family. As to quaternary structure, part of the 50S ribosomal subunit. Contacts protein L20.

This protein binds to 23S rRNA in the presence of protein L20. This is Large ribosomal subunit protein bL21 from Clostridium botulinum (strain ATCC 19397 / Type A).